Reading from the N-terminus, the 215-residue chain is C-type lectin domain family 4 member D (215 aa).

Over 1-17 (MGLEKPQSKLEGGMHPQ) the chain is Cytoplasmic. Residues 18-38 (LIPSVIAVVFILLLSVCFIAS) traverse the membrane as a helical; Signal-anchor for type II membrane protein segment. Topologically, residues 39 to 215 (CLVTHHNFSR…ICKIPGTTLN (177 aa)) are extracellular. Asn-45 is a glycosylation site (N-linked (GlcNAc...) asparagine). A disulfide bond links Cys-84 and Cys-95. A C-type lectin domain is found at 91 to 208 (FQSNCYFPLT…CNFEASRICK (118 aa)). N-linked (GlcNAc...) asparagine glycans are attached at residues Asn-102 and Asn-111. 2 cysteine pairs are disulfide-bonded: Cys-112–Cys-207 and Cys-182–Cys-199. The Ca(2+) site is built by Glu-173, Asp-175, Asn-195, and Asp-196.

Heterodimer with CLEC4E; disulfide-linked. CLEC4E acts as a bridge for interaction between CLEC4D and FCER1G to form a functional complex. Heterodimer with CLEC6A; this heterodimer forms a pattern recognition receptor (PRR) against fungal infection. Expressed weakly in peripheral blood leukocytes, bone marrow and spleen. Expression is confined mostly in monocytes and macrophage and seems to be up-regulated by IL-6, IL-10, TNF-alpha and IFN-gamma.

It is found in the cell membrane. Its function is as follows. Calcium-dependent lectin that acts as a pattern recognition receptor (PRR) of the innate immune system: recognizes damage-associated molecular patterns (DAMPs) of pathogen-associated molecular patterns (PAMPs) of bacteria and fungi. The PAMPs include alpha-mannans on C.albicans hypheas and mycobacterial trehalose 6,6'-dimycolate (TDM). Interacts with signaling adapter Fc receptor gamma chain/FCER1G, likely via CLEC4E, to form a functional complex in myeloid cells. Binding of mycobacterial TDM or C.albicans alpha-mannans to this receptor complex leads to phosphorylation of the immunoreceptor tyrosine-based activation motif (ITAM) of FCER1G, triggering activation of SYK, CARD9 and NF-kappa-B, consequently driving maturation of antigen-presenting cells and shaping antigen-specific priming of T-cells toward effector T-helper 1 and T-helper 17 cell subtypes. The heterodimer formed with CLEC6A is active against fungal infection. Functions as an endocytic receptor. May be involved in antigen uptake at the site of infection, either for clearance of the antigen, or for processing and further presentation to T-cells. This chain is C-type lectin domain family 4 member D, found in Homo sapiens (Human).